Here is a 360-residue protein sequence, read N- to C-terminus: MLVWFAKFLEQYYSGFNVVSYLTFRSVLALLTALLLSLWIGPKMIRRLQIFKFGQEVRNDGPESHFQKRGTPTMGGLMILATITVSTLLWGDLSNPYIWFSLFVLLGYGAIGFVDDYRKIKYKNTDGLIARWKYFWLSLVSLIAIFGMYALGKDTDATRLVVPFFKEIMPQLGLFYVVLAYFVIVGTSNAVNLTDGLDGLAIMPTVFVAGAFAIIAWATGNVEISKYLYIPYIKYTSELVIFCTAIVGAGLGFLWFNTYPAQVFMGDVGSLALGGALGTIAVLVRQEFLLVIMGGVFVMETVSVILQVGSYKLRKKRIFRMAPIHHHYELKGWPEPRVIIRFWIISLMLVLFGLVTLKLR.

The next 10 membrane-spanning stretches (helical) occupy residues 21-41 (YLTFRSVLALLTALLLSLWIG), 73-93 (TMGGLMILATITVSTLLWGDL), 94-114 (SNPYIWFSLFVLLGYGAIGFV), 132-152 (WKYFWLSLVSLIAIFGMYALG), 168-188 (IMPQLGLFYVVLAYFVIVGTS), 199-219 (GLAIMPTVFVAGAFAIIAWAT), 239-259 (LVIFCTAIVGAGLGFLWFNTY), 263-283 (VFMGDVGSLALGGALGTIAVL), 288-308 (FLLVIMGGVFVMETVSVILQV), and 338-358 (VIIRFWIISLMLVLFGLVTLK).

It belongs to the glycosyltransferase 4 family. MraY subfamily. It depends on Mg(2+) as a cofactor.

The protein localises to the cell inner membrane. The catalysed reaction is UDP-N-acetyl-alpha-D-muramoyl-L-alanyl-gamma-D-glutamyl-meso-2,6-diaminopimeloyl-D-alanyl-D-alanine + di-trans,octa-cis-undecaprenyl phosphate = di-trans,octa-cis-undecaprenyl diphospho-N-acetyl-alpha-D-muramoyl-L-alanyl-D-glutamyl-meso-2,6-diaminopimeloyl-D-alanyl-D-alanine + UMP. It functions in the pathway cell wall biogenesis; peptidoglycan biosynthesis. In terms of biological role, catalyzes the initial step of the lipid cycle reactions in the biosynthesis of the cell wall peptidoglycan: transfers peptidoglycan precursor phospho-MurNAc-pentapeptide from UDP-MurNAc-pentapeptide onto the lipid carrier undecaprenyl phosphate, yielding undecaprenyl-pyrophosphoryl-MurNAc-pentapeptide, known as lipid I. The protein is Phospho-N-acetylmuramoyl-pentapeptide-transferase of Mannheimia succiniciproducens (strain KCTC 0769BP / MBEL55E).